Reading from the N-terminus, the 278-residue chain is Digeranylgeranylglyceryl phosphate synthase (278 aa).

The next 8 helical transmembrane spans lie at 15–35, 36–56, 89–109, 133–153, 159–179, 203–223, 225–245, and 258–278; these read VIGS…WKIV, PIKL…GYII, IVLF…AFII, LIVA…FFEG, TLIP…VKGI, WFIS…PYFF, FNII…LVVL, and AYMK…TLPI.

Belongs to the UbiA prenyltransferase family. DGGGP synthase subfamily. The cofactor is Mg(2+).

It is found in the cell membrane. The enzyme catalyses sn-3-O-(geranylgeranyl)glycerol 1-phosphate + (2E,6E,10E)-geranylgeranyl diphosphate = 2,3-bis-O-(geranylgeranyl)-sn-glycerol 1-phosphate + diphosphate. It participates in membrane lipid metabolism; glycerophospholipid metabolism. Prenyltransferase that catalyzes the transfer of the geranylgeranyl moiety of geranylgeranyl diphosphate (GGPP) to the C2 hydroxyl of (S)-3-O-geranylgeranylglyceryl phosphate (GGGP). This reaction is the second ether-bond-formation step in the biosynthesis of archaeal membrane lipids. This chain is Digeranylgeranylglyceryl phosphate synthase, found in Sulfurisphaera tokodaii (strain DSM 16993 / JCM 10545 / NBRC 100140 / 7) (Sulfolobus tokodaii).